A 320-amino-acid polypeptide reads, in one-letter code: Transaldolase (320 aa).

Residue Lys-135 is the Schiff-base intermediate with substrate of the active site.

It belongs to the transaldolase family. Type 1 subfamily. As to quaternary structure, homodimer.

Its subcellular location is the cytoplasm. The catalysed reaction is D-sedoheptulose 7-phosphate + D-glyceraldehyde 3-phosphate = D-erythrose 4-phosphate + beta-D-fructose 6-phosphate. It functions in the pathway carbohydrate degradation; pentose phosphate pathway; D-glyceraldehyde 3-phosphate and beta-D-fructose 6-phosphate from D-ribose 5-phosphate and D-xylulose 5-phosphate (non-oxidative stage): step 2/3. Its function is as follows. Transaldolase is important for the balance of metabolites in the pentose-phosphate pathway. This Colwellia psychrerythraea (strain 34H / ATCC BAA-681) (Vibrio psychroerythus) protein is Transaldolase.